A 551-amino-acid polypeptide reads, in one-letter code: 2,3-bisphosphoglycerate-independent phosphoglycerate mutase (551 aa).

2 residues coordinate Mn(2+): D22 and S74. The active-site Phosphoserine intermediate is the S74. Substrate is bound by residues H135, 165–166 (RD), R201, R208, and 281–284 (RGDR). D319 lines the Mn(2+) pocket. K356 serves as a coordination point for substrate. D424, H428, D465, H466, and H495 together coordinate Mn(2+).

It belongs to the BPG-independent phosphoglycerate mutase family. As to quaternary structure, monomer. Mn(2+) is required as a cofactor.

The protein resides in the cytoplasm. The catalysed reaction is (2R)-2-phosphoglycerate = (2R)-3-phosphoglycerate. The protein operates within carbohydrate degradation; glycolysis; pyruvate from D-glyceraldehyde 3-phosphate: step 3/5. Functionally, catalyzes the interconversion of 2-phosphoglycerate (2-PGA) and 3-phosphoglycerate (3-PGA). The sequence is that of 2,3-bisphosphoglycerate-independent phosphoglycerate mutase from Trypanosoma brucei brucei (strain 927/4 GUTat10.1).